The following is a 502-amino-acid chain: Probable cytosol aminopeptidase (502 aa).

Mn(2+) contacts are provided by Lys269 and Asp274. Lys281 is a catalytic residue. The Mn(2+) site is built by Asp292, Asp351, and Glu353. Residue Arg355 is part of the active site.

The protein belongs to the peptidase M17 family. Mn(2+) is required as a cofactor.

The protein localises to the cytoplasm. It carries out the reaction Release of an N-terminal amino acid, Xaa-|-Yaa-, in which Xaa is preferably Leu, but may be other amino acids including Pro although not Arg or Lys, and Yaa may be Pro. Amino acid amides and methyl esters are also readily hydrolyzed, but rates on arylamides are exceedingly low.. It catalyses the reaction Release of an N-terminal amino acid, preferentially leucine, but not glutamic or aspartic acids.. Its function is as follows. Presumably involved in the processing and regular turnover of intracellular proteins. Catalyzes the removal of unsubstituted N-terminal amino acids from various peptides. The chain is Probable cytosol aminopeptidase from Vibrio parahaemolyticus serotype O3:K6 (strain RIMD 2210633).